A 378-amino-acid polypeptide reads, in one-letter code: Cln5-like protein 1 (378 aa).

The N-terminal stretch at 1–20 (MNKIIIFILFLISILQSVRG) is a signal peptide. N-linked (GlcNAc...) asparagine glycosylation is found at asparagine 63, asparagine 93, asparagine 135, asparagine 181, asparagine 220, asparagine 226, asparagine 254, and asparagine 280. The helical transmembrane segment at 308-328 (WIFIIILLSFTTVYLVGGILI) threads the bilayer.

The protein belongs to the CLN5 family.

It is found in the membrane. This chain is Cln5-like protein 1 (cln5la), found in Dictyostelium discoideum (Social amoeba).